A 624-amino-acid chain; its full sequence is Ubiquitin-associated and SH3 domain-containing protein A (624 aa).

A UBA domain is found at 19 to 60 (RSTPSLLDPLLAMGFPTHTALKALAATGRKTAEAAADWLHGH). The SH3 domain maps to 238-303 (VHYQTLKALF…PENYTERANE (66 aa)). Residues 358 to 624 (RRGILVVRHG…FNWRNWISSN (267 aa)) form a phosphatase-like region.

As to quaternary structure, homodimer or homooligomer. Interacts with CBL. Part of a complex containing CBL and activated EGFR. Interacts with ubiquitin and with mono-ubiquitinated proteins. Interacts with dynamin.

Its subcellular location is the cytoplasm. The protein localises to the nucleus. Its function is as follows. Interferes with CBL-mediated down-regulation and degradation of receptor-type tyrosine kinases. Promotes accumulation of activated target receptors, such as T-cell receptors, EGFR and PDGFRB, on the cell surface. May inhibit dynamin-dependent endocytic pathways by functionally sequestering dynamin via its SH3 domain. Exhibits negligible protein tyrosine phosphatase activity at neutral pH. May act as a dominant-negative regulator of UBASH3B-dependent dephosphorylation. This is Ubiquitin-associated and SH3 domain-containing protein A (Ubash3a) from Mus musculus (Mouse).